Here is an 89-residue protein sequence, read N- to C-terminus: Small ribosomal subunit protein uS14 (89 aa).

Belongs to the universal ribosomal protein uS14 family. As to quaternary structure, part of the 30S ribosomal subunit. Contacts proteins S3 and S10.

In terms of biological role, binds 16S rRNA, required for the assembly of 30S particles and may also be responsible for determining the conformation of the 16S rRNA at the A site. This Chlorobaculum tepidum (strain ATCC 49652 / DSM 12025 / NBRC 103806 / TLS) (Chlorobium tepidum) protein is Small ribosomal subunit protein uS14.